A 168-amino-acid polypeptide reads, in one-letter code: Protein FAM163A (168 aa).

Residues 6–26 (VVITGGILATVILLCIIAVLC) traverse the membrane as a helical segment.

Belongs to the FAM163 family.

It is found in the membrane. In Mus musculus (Mouse), this protein is Protein FAM163A (Fam163a).